We begin with the raw amino-acid sequence, 365 residues long: tRNA(Met) cytidine acetate ligase (365 aa).

ATP is bound by residues 7–20 (IAEF…HKYL), Gly96, Asn152, and Arg175.

The protein belongs to the TmcAL family.

The protein localises to the cytoplasm. It catalyses the reaction cytidine(34) in elongator tRNA(Met) + acetate + ATP = N(4)-acetylcytidine(34) in elongator tRNA(Met) + AMP + diphosphate. Catalyzes the formation of N(4)-acetylcytidine (ac(4)C) at the wobble position of elongator tRNA(Met), using acetate and ATP as substrates. First activates an acetate ion to form acetyladenylate (Ac-AMP) and then transfers the acetyl group to tRNA to form ac(4)C34. The sequence is that of tRNA(Met) cytidine acetate ligase from Streptococcus pneumoniae (strain ATCC BAA-255 / R6).